A 171-amino-acid chain; its full sequence is Probable deoxyuridine 5'-triphosphate nucleotidohydrolase (171 aa).

It belongs to the dCTP deaminase family. Archaeal dUTPase subfamily.

The catalysed reaction is dUTP + H2O = dUMP + diphosphate + H(+). Its pathway is pyrimidine metabolism; dUMP biosynthesis; dUMP from dCTP (dUTP route): step 2/2. Functionally, this enzyme is involved in nucleotide metabolism: it produces dUMP, the immediate precursor of thymidine nucleotides and it decreases the intracellular concentration of dUTP so that uracil cannot be incorporated into DNA. The chain is Probable deoxyuridine 5'-triphosphate nucleotidohydrolase from Methanosarcina acetivorans (strain ATCC 35395 / DSM 2834 / JCM 12185 / C2A).